We begin with the raw amino-acid sequence, 175 residues long: Outer membrane protein assembly factor BamE (175 aa).

A signal peptide spans 1 to 21 (MQNTKLLLTSFTFVGLLALAG). A lipid anchor (N-palmitoyl cysteine) is attached at C22. A lipid anchor (S-diacylglycerol cysteine) is attached at C22. Disordered regions lie at residues 117-147 (ALLG…KPGS) and 156-175 (IDNV…TSPQ).

The protein belongs to the BamE family. In terms of assembly, part of the Bam complex.

It is found in the cell outer membrane. Its function is as follows. Part of the outer membrane protein assembly complex, which is involved in assembly and insertion of beta-barrel proteins into the outer membrane. May have a structural role in maintaining the cell envelope integrity. In Pseudomonas fluorescens, this protein is Outer membrane protein assembly factor BamE.